We begin with the raw amino-acid sequence, 241 residues long: Proteasome subunit beta type-1 (241 aa).

Position 1 is an N-acetylmethionine (Met1). Positions Met1–Leu28 are excised as a propeptide. O-linked (GlcNAc) serine glycosylation occurs at Ser58. Phosphoserine is present on residues Ser62 and Ser68. The residue at position 150 (Tyr150) is a Phosphotyrosine. Ser162 carries the phosphoserine modification. Lys204 carries the post-translational modification N6-acetyllysine. Ser209 carries O-linked (GlcNAc) serine glycosylation.

Belongs to the peptidase T1B family. In terms of assembly, the 26S proteasome consists of a 20S proteasome core and two 19S regulatory subunits. The 20S proteasome core is a barrel-shaped complex made of 28 subunits that are arranged in four stacked rings. The two outer rings are each formed by seven alpha subunits, and the two inner rings are formed by seven beta subunits. The proteolytic activity is exerted by three beta-subunits PSMB5, PSMB6 and PSMB7. Interacts with SERPINB2. Interacts with RFPL4A.

The protein localises to the cytoplasm. It is found in the nucleus. Non-catalytic component of the 20S core proteasome complex involved in the proteolytic degradation of most intracellular proteins. This complex plays numerous essential roles within the cell by associating with different regulatory particles. Associated with two 19S regulatory particles, forms the 26S proteasome and thus participates in the ATP-dependent degradation of ubiquitinated proteins. The 26S proteasome plays a key role in the maintenance of protein homeostasis by removing misfolded or damaged proteins that could impair cellular functions, and by removing proteins whose functions are no longer required. Associated with the PA200 or PA28, the 20S proteasome mediates ubiquitin-independent protein degradation. This type of proteolysis is required in several pathways including spermatogenesis (20S-PA200 complex) or generation of a subset of MHC class I-presented antigenic peptides (20S-PA28 complex). In Bos taurus (Bovine), this protein is Proteasome subunit beta type-1 (PSMB1).